The following is a 447-amino-acid chain: N-succinylarginine dihydrolase (447 aa).

Substrate contacts are provided by residues 19–28 (AGLSFGNEAS), asparagine 110, and 137–138 (HR). Residue glutamate 174 is part of the active site. Substrate is bound at residue arginine 212. The active site involves histidine 248. The substrate site is built by aspartate 250 and asparagine 359. Cysteine 365 (nucleophile) is an active-site residue.

The protein belongs to the succinylarginine dihydrolase family. Homodimer.

It catalyses the reaction N(2)-succinyl-L-arginine + 2 H2O + 2 H(+) = N(2)-succinyl-L-ornithine + 2 NH4(+) + CO2. The protein operates within amino-acid degradation; L-arginine degradation via AST pathway; L-glutamate and succinate from L-arginine: step 2/5. Its function is as follows. Catalyzes the hydrolysis of N(2)-succinylarginine into N(2)-succinylornithine, ammonia and CO(2). This Escherichia coli O9:H4 (strain HS) protein is N-succinylarginine dihydrolase.